Consider the following 221-residue polypeptide: Cysteine-rich venom protein (221 aa).

Gly1 is a signal peptide. Positions 21 to 148 constitute an SCP domain; that stretch reads DLHNSLRRSV…EYKYFYVCQY (128 aa). Intrachain disulfides connect Cys57–Cys135, Cys74–Cys149, Cys130–Cys146, Cys168–Cys175, Cys171–Cys180, Cys184–Cys216, Cys193–Cys210, and Cys201–Cys214. The region spanning 184-216 is the ShKT domain; it reads CTHEDKFTNCKDLVKQGCNNNYLKTNCPASCSC.

Belongs to the CRISP family. In terms of tissue distribution, expressed by the venom gland.

The protein localises to the secreted. Its function is as follows. Blocks contraction of smooth muscle elicited by high potassium-induced depolarization, but does not block caffeine-stimulated contraction. May target voltage-gated calcium channels in smooth muscle. The polypeptide is Cysteine-rich venom protein (Vipera nikolskii (Nikolsky's adder)).